The sequence spans 469 residues: MSEVLSPMTAISTKPAPRVGFVSLGCPKALTDSELILTQLSAEGYQTSKTFEGADLVIVNTCGFIDDAVKESLDTIGEALAENGRVIVTGCLGAKGGEGAGNLVRQMHPSVLAVTGPHATQEVMDAVHLNLPKPHDPFVDLVPNAFGIAGIKLTPKHYAYLKISEGCNHRCTFCIIPSMRGDLVSRPIGDVLNEARALFEGGVKELLVISQDTSAYGVDVKYRTGFWDGKPVKTRMLELVQALGDIAEPYGAWVRLHYVYPYPSVDEVLPLMATGKVLPYLDVPLQHSHPDVLKRMKRPASGEKNLERIARWREICPEIVIRSTFIAGFPGETEAEFAHLLEFMREARIDRAGCFAYSAVEGATANDIPGMLPLEVREERRARFMAVAEEVSSLKLQQRVGATMQVLVDSAPALGRKGGTGRSYADAPEIDGVVKLLPPEKISKTLKVGEFTRARIVGTQGHDLVAIPV.

An MTTase N-terminal domain is found at P17–P132. [4Fe-4S] cluster contacts are provided by C26, C62, C91, C167, C171, and C174. Residues L153–K395 enclose the Radical SAM core domain. The TRAM domain maps to Q397–V469.

It belongs to the methylthiotransferase family. RimO subfamily. [4Fe-4S] cluster serves as cofactor.

It localises to the cytoplasm. The enzyme catalyses L-aspartate(89)-[ribosomal protein uS12]-hydrogen + (sulfur carrier)-SH + AH2 + 2 S-adenosyl-L-methionine = 3-methylsulfanyl-L-aspartate(89)-[ribosomal protein uS12]-hydrogen + (sulfur carrier)-H + 5'-deoxyadenosine + L-methionine + A + S-adenosyl-L-homocysteine + 2 H(+). Its function is as follows. Catalyzes the methylthiolation of an aspartic acid residue of ribosomal protein uS12. This is Ribosomal protein uS12 methylthiotransferase RimO from Polaromonas sp. (strain JS666 / ATCC BAA-500).